The following is a 531-amino-acid chain: UDP-glucuronosyltransferase 1A6 (531 aa).

The signal sequence occupies residues 1–26; it reads MACLLSAAQRASAGVLFVALWGTVLG. Residue Asn294 is glycosylated (N-linked (GlcNAc...) asparagine). The helical transmembrane segment at 489–505 threads the bilayer; it reads VIGFLLAIVLTVAFVTF.

The protein belongs to the UDP-glycosyltransferase family.

The protein resides in the microsome. Its subcellular location is the endoplasmic reticulum membrane. The enzyme catalyses glucuronate acceptor + UDP-alpha-D-glucuronate = acceptor beta-D-glucuronoside + UDP + H(+). It catalyses the reaction (5Z,8Z,11Z,14Z)-eicosatetraenoate + UDP-alpha-D-glucuronate = O-[(5Z),(8Z),(11Z),(14Z)-eicosatetraenoyl]-beta-D-glucuronate + UDP. The catalysed reaction is 15-hydroxy-(5Z,8Z,11Z,13E)-eicosatetraenoate + UDP-alpha-D-glucuronate = 15-O-(beta-D-glucuronosyl)-(5Z,8Z,11Z,14Z)-eicosatetraenoate + UDP + H(+). It carries out the reaction (E)-ferulate + UDP-alpha-D-glucuronate = (E)-4-O-(beta-D-glucuronosyl)-ferulate + UDP + H(+). The enzyme catalyses (E)-ferulate + UDP-alpha-D-glucuronate = (E)-ferulic acid beta-D-glucuronate ester + UDP. UDP-glucuronosyltransferase (UGT) that catalyzes phase II biotransformation reactions in which lipophilic substrates are conjugated with glucuronic acid to facilitate their inactivation and excretion from the body. Essential for the elimination and detoxification of drugs, xenobiotics and endogenous compounds. Involved in the glucuronidation of arachidonic acid (AA) and AA-derived eicosanoids including 15-HETE and 20-HETE. Conjugates small planar phenolic molecules such as 4-nitrophenol, 1-naphthol, and 4-methylumbelliferone. The bulky phenol 4-hydroxybiphenyl, androgens and estrogens are not substrates. 2-hydroxybiphenyl is an excellent substrate. Involved in the glucuronidation of the phytochemical ferulic acid at the phenolic or the carboxylic acid group. The protein is UDP-glucuronosyltransferase 1A6 (UGT1) of Oryctolagus cuniculus (Rabbit).